The following is a 90-amino-acid chain: DNA-binding protein HU-1 (90 aa).

Phosphothreonine is present on Thr4. The disordered stretch occupies residues 55–90 (RSARKGRNPQTGEEIEIPATKNPAFKPGKQLKDAVN).

Belongs to the bacterial histone-like protein family. As to quaternary structure, homodimer.

In terms of biological role, histone-like DNA-binding protein which is capable of wrapping DNA to stabilize it, and thus to prevent its denaturation under extreme environmental conditions. The polypeptide is DNA-binding protein HU-1 (hup1) (Halalkalibacterium halodurans (strain ATCC BAA-125 / DSM 18197 / FERM 7344 / JCM 9153 / C-125) (Bacillus halodurans)).